Consider the following 265-residue polypeptide: Ribosomal RNA small subunit methyltransferase A (265 aa).

6 residues coordinate S-adenosyl-L-methionine: Asn-13, Leu-15, Gly-40, Glu-61, Asp-85, and Asn-103.

The protein belongs to the class I-like SAM-binding methyltransferase superfamily. rRNA adenine N(6)-methyltransferase family. RsmA subfamily.

Its subcellular location is the cytoplasm. It carries out the reaction adenosine(1518)/adenosine(1519) in 16S rRNA + 4 S-adenosyl-L-methionine = N(6)-dimethyladenosine(1518)/N(6)-dimethyladenosine(1519) in 16S rRNA + 4 S-adenosyl-L-homocysteine + 4 H(+). In terms of biological role, specifically dimethylates two adjacent adenosines (A1518 and A1519) in the loop of a conserved hairpin near the 3'-end of 16S rRNA in the 30S particle. May play a critical role in biogenesis of 30S subunits. The sequence is that of Ribosomal RNA small subunit methyltransferase A from Aromatoleum aromaticum (strain DSM 19018 / LMG 30748 / EbN1) (Azoarcus sp. (strain EbN1)).